The following is a 362-amino-acid chain: Adenosine deaminase (362 aa).

Zn(2+)-binding residues include His19 and His21. Residues His21, Asp23, and Gly181 each coordinate substrate. His208 is a binding site for Zn(2+). The Proton donor role is filled by Glu211. Asp300 contacts Zn(2+).

The protein belongs to the metallo-dependent hydrolases superfamily. Adenosine and AMP deaminases family. Adenosine deaminase subfamily. It depends on Zn(2+) as a cofactor.

The catalysed reaction is adenosine + H2O + H(+) = inosine + NH4(+). The enzyme catalyses 2'-deoxyadenosine + H2O + H(+) = 2'-deoxyinosine + NH4(+). Functionally, catalyzes the hydrolytic deamination of adenosine and 2-deoxyadenosine. In Mycolicibacterium gilvum (strain PYR-GCK) (Mycobacterium gilvum (strain PYR-GCK)), this protein is Adenosine deaminase.